Reading from the N-terminus, the 156-residue chain is Endoribonuclease YbeY (156 aa).

The Zn(2+) site is built by His-115, His-119, and His-125.

Belongs to the endoribonuclease YbeY family. Requires Zn(2+) as cofactor.

It is found in the cytoplasm. Single strand-specific metallo-endoribonuclease involved in late-stage 70S ribosome quality control and in maturation of the 3' terminus of the 16S rRNA. This is Endoribonuclease YbeY from Mannheimia succiniciproducens (strain KCTC 0769BP / MBEL55E).